A 383-amino-acid chain; its full sequence is Acetylornithine deacetylase (383 aa).

Histidine 80 contributes to the Zn(2+) binding site. Aspartate 82 is an active-site residue. Residue aspartate 112 participates in Zn(2+) binding. Glutamate 144 is an active-site residue. Zn(2+)-binding residues include glutamate 145, glutamate 169, and histidine 355.

The protein belongs to the peptidase M20A family. ArgE subfamily. As to quaternary structure, homodimer. Requires Zn(2+) as cofactor. Co(2+) is required as a cofactor. Glutathione serves as cofactor.

The protein resides in the cytoplasm. The catalysed reaction is N(2)-acetyl-L-ornithine + H2O = L-ornithine + acetate. The protein operates within amino-acid biosynthesis; L-arginine biosynthesis; L-ornithine from N(2)-acetyl-L-ornithine (linear): step 1/1. Catalyzes the hydrolysis of the amide bond of N(2)-acetylated L-amino acids. Cleaves the acetyl group from N-acetyl-L-ornithine to form L-ornithine, an intermediate in L-arginine biosynthesis pathway, and a branchpoint in the synthesis of polyamines. The sequence is that of Acetylornithine deacetylase from Shigella flexneri serotype 5b (strain 8401).